Reading from the N-terminus, the 2342-residue chain is Outer kinetochore KNL1 complex subunit KNL1 (2342 aa).

Residues 1 to 56 form a disordered region; it reads MDGVSSEANEENDNIERPVRRRHSSILKPPRSPLQDLRGGNERVQESNALRNKKNS. Positions 1–250 are may mediate oligomerization; sequence MDGVSSEANE…FNDFIKRLKT (250 aa). The interaction with BUB1 and BUB1B stretch occupies residues 1 to 728; sequence MDGVSSEANE…QSLFSTTKPL (728 aa). Interaction with microtubules stretches follow at residues 17–34 and 53–80; these read RPVRRRHSSILKPPRSPL and KKNSRRVSFADTIKVFQTESHMKIVRKS. The interaction with PP1CA; contains the protein phosphatase 1 (PP1) interaction motifs SILK, RVXF and phi-phi stretch occupies residues 23–80; sequence HSSILKPPRSPLQDLRGGNERVQESNALRNKKNSRRVSFADTIKVFQTESHMKIVRKS. At Ser-24 the chain carries Phosphoserine; by AURKB. Position 32 is a phosphoserine (Ser-32). Ser-60 is modified (phosphoserine; by AURKB). Positions 174–190 are interaction with BUB1; it reads ENQMDLTSSHTVMITKG. The interaction with BUB1B stretch occupies residues 210 to 226; sequence ANLKLHTEDSRMKKEVN. Thr-539 bears the Phosphothreonine mark. Residues Ser-578 and Ser-584 each carry the phosphoserine modification. Phosphothreonine is present on Thr-586. Positions 620–646 are disordered; the sequence is APESTSESHSQSKSSSDECEEITKSRN. Low complexity predominate over residues 622 to 633; sequence ESTSESHSQSKS. The residue at position 767 (Ser-767) is a Phosphoserine. The segment at 855-1201 is 2 X 104 AA approximate repeats; sequence EDESVQKPKF…VTDSHTVFID (347 aa). Repeat 1 spans residues 885 to 989; it reads DKTIVFSEDD…MTESHTVFID (105 aa). Thr-901 carries the phosphothreonine modification. Phosphoserine is present on residues Ser-956, Ser-1039, Ser-1076, and Ser-1088. The stretch at 1099–1201 is repeat 2; it reads DKTIVFSENH…VTDSHTVFID (103 aa). Ser-1448 is modified (phosphoserine). The interval 1639 to 1662 is disordered; it reads SNAKDSRDEENKKSHNGAETTSLP. Residues 1642-1651 are compositionally biased toward basic and acidic residues; sequence KDSRDEENKK. Residues Ser-1675 and Ser-1773 each carry the phosphoserine modification. The Nuclear localization signal motif lies at 1789-1803; it reads TWVQEEEDIHKEKKI. Residue Ser-1831 is modified to Phosphoserine. Residues Ser-1831 and Ser-1834 each carry the phosphoserine; by TTK modification. 2 positions are modified to phosphoserine: Ser-1845 and Ser-1860. The required for interaction with ZWINT stretch occupies residues 1981 to 2108; it reads KMRHCSDKEL…LLELEVQKEQ (128 aa). Residues 2024–2133 are a coiled coil; it reads VQSAQNEREK…EELLDQLSLS (110 aa). An interaction with NSL1, DSN1 and required for assembly into the outer kinetochore region spans residues 2091 to 2311; sequence EEEELQRNLL…GNTSQDDIAT (221 aa).

Component of the KNL1 complex composed of KNL1 and ZWINT. Part of the ten-subunit outer kinetochore KMN network that includes the KNL1, MIS12 and NDC80 complexes; a bioriented kinetochore contains approximately 150 copies of the network. Interacts (via C-terminus) with the MIS12 complex subunits NSL1 (via C-terminus), PMF1 and DSN1; the interaction is direct. Interacts (via N-terminal region) with BUB1B (via BUB1 N-terminal domain); the interaction is direct and is required for cell cycle arrest upon activation of the mitotic spindle assembly checkpoint. Interacts (via N-terminal region) with BUB1 (via BUB1 N-terminal domain); the interaction is direct. Interacts with the protein phosphatase PP1 subunit PPP1CA; the interaction is direct and mutually exclusive with binding to microtubules. Interacts with the protein phosphatase PP1 subunit PPP1CC; the interaction is direct and mutually exclusive with binding to microtubules. In terms of processing, phosphorylation by AURKB negatively regulates its interaction with protein phosphatase 1 (PP1) subunit PPP1CA and with microtubules. In terms of tissue distribution, highly expressed in testis, where it is localized in germ cells, in particular in spermatocytes and in the pre-acrosome of round spermatids. Detected in the acrosome of ejaculated spermatozoa. Detected in adult thymus, bone marrow, colon, small intestine, appendix and placenta, and in fetal liver and thymus.

It localises to the nucleus. It is found in the chromosome. The protein localises to the centromere. Its subcellular location is the kinetochore. The protein resides in the cytoplasm. Acts as a component of the outer kinetochore KNL1 complex that serves as a docking point for spindle assembly checkpoint components and mediates microtubule-kinetochore interactions. Kinetochores, consisting of a centromere-associated inner segment and a microtubule-contacting outer segment, play a crucial role in chromosome segregation by mediating the physical connection between centromeric DNA and spindle microtubules. The outer kinetochore is made up of the ten-subunit KMN network, comprising the MIS12, NDC80 and KNL1 complexes, and auxiliary microtubule-associated components; together they connect the outer kinetochore with the inner kinetochore, bind microtubules, and mediate interactions with mitotic checkpoint proteins that delay anaphase until chromosomes are bioriented on the spindle. Required for kinetochore binding by a distinct subset of kMAPs (kinetochore-bound microtubule-associated proteins) and motors. Acts in coordination with CENPK to recruit the NDC80 complex to the outer kinetochore. Can bind either to microtubules or to the protein phosphatase 1 (PP1) catalytic subunits PPP1CA and PPP1CC (via overlapping binding sites), it has higher affinity for PP1. Recruits MAD2L1 to the kinetochore and also directly links BUB1 and BUB1B to the kinetochore. In addition to orienting mitotic chromosomes, it is also essential for alignment of homologous chromosomes during meiotic metaphase I. In meiosis I, required to activate the spindle assembly checkpoint at unattached kinetochores to correct erroneous kinetochore-microtubule attachments. This is Outer kinetochore KNL1 complex subunit KNL1 from Homo sapiens (Human).